Reading from the N-terminus, the 267-residue chain is 4-hydroxy-tetrahydrodipicolinate reductase (267 aa).

Residues 8–13 and Glu-34 contribute to the NAD(+) site; that span reads GAGGRM. Arg-35 lines the NADP(+) pocket. NAD(+)-binding positions include 98-100 and 122-125; these read GTT and APNM. The active-site Proton donor/acceptor is His-155. His-156 is a (S)-2,3,4,5-tetrahydrodipicolinate binding site. Lys-159 functions as the Proton donor in the catalytic mechanism. A (S)-2,3,4,5-tetrahydrodipicolinate-binding site is contributed by 165-166; that stretch reads GT.

This sequence belongs to the DapB family.

It localises to the cytoplasm. The catalysed reaction is (S)-2,3,4,5-tetrahydrodipicolinate + NAD(+) + H2O = (2S,4S)-4-hydroxy-2,3,4,5-tetrahydrodipicolinate + NADH + H(+). It carries out the reaction (S)-2,3,4,5-tetrahydrodipicolinate + NADP(+) + H2O = (2S,4S)-4-hydroxy-2,3,4,5-tetrahydrodipicolinate + NADPH + H(+). It participates in amino-acid biosynthesis; L-lysine biosynthesis via DAP pathway; (S)-tetrahydrodipicolinate from L-aspartate: step 4/4. In terms of biological role, catalyzes the conversion of 4-hydroxy-tetrahydrodipicolinate (HTPA) to tetrahydrodipicolinate. The chain is 4-hydroxy-tetrahydrodipicolinate reductase from Thioalkalivibrio sulfidiphilus (strain HL-EbGR7).